The sequence spans 147 residues: Myoglobin (147 aa).

Positions 2–141 (ADFDAVLKFW…VIADLEANYK (140 aa)) constitute a Globin domain. Residue H60 coordinates nitrite. H60 is an O2 binding site. H89 provides a ligand contact to heme b.

The protein belongs to the globin family. In terms of assembly, monomeric.

It localises to the cytoplasm. The protein resides in the sarcoplasm. The catalysed reaction is Fe(III)-heme b-[protein] + nitric oxide + H2O = Fe(II)-heme b-[protein] + nitrite + 2 H(+). The enzyme catalyses H2O2 + AH2 = A + 2 H2O. Functionally, monomeric heme protein which primary function is to store oxygen and facilitate its diffusion within muscle tissues. Reversibly binds oxygen through a pentacoordinated heme iron and enables its timely and efficient release as needed during periods of heightened demand. Depending on the oxidative conditions of tissues and cells, and in addition to its ability to bind oxygen, it also has a nitrite reductase activity whereby it regulates the production of bioactive nitric oxide. Under stress conditions, like hypoxia and anoxia, it also protects cells against reactive oxygen species thanks to its pseudoperoxidase activity. The polypeptide is Myoglobin (mb) (Sarda chiliensis (Pacific bonito)).